The sequence spans 370 residues: Muconate cycloisomerase 1 (370 aa).

The active site involves Lys166. 3 residues coordinate Mn(2+): Asp195, Glu221, and Asp246.

The protein belongs to the mandelate racemase/muconate lactonizing enzyme family. As to quaternary structure, homooctamer. Mn(2+) is required as a cofactor.

It carries out the reaction (S)-muconolactone = cis,cis-muconate + H(+). It participates in aromatic compound metabolism; beta-ketoadipate pathway; 5-oxo-4,5-dihydro-2-furylacetate from catechol: step 2/3. Its function is as follows. Catalyzes a syn cycloisomerization. In Acinetobacter baylyi (strain ATCC 33305 / BD413 / ADP1), this protein is Muconate cycloisomerase 1 (catB).